The sequence spans 326 residues: uncharacterized protein (326 aa).

In terms of domain architecture, S4 RNA-binding spans 15–76; sequence VRIEKFCLKL…IEPYLHNHSE (62 aa). Asp-147 is a catalytic residue.

This sequence belongs to the pseudouridine synthase RluA family.

The enzyme catalyses a uridine in RNA = a pseudouridine in RNA. This is an uncharacterized protein from Mycoplasma pneumoniae (strain ATCC 29342 / M129 / Subtype 1) (Mycoplasmoides pneumoniae).